Consider the following 918-residue polypeptide: Whirlin (918 aa).

In terms of domain architecture, PDZ 1 spans 141-224 (LVSLRRAKAH…LVLSVYSAGR (84 aa)). The interval 240–266 (PQGRSTSPPSSLPQPHGSTLRQREDDR) is disordered. In terms of domain architecture, PDZ 2 spans 280-362 (KVNLVLGDGR…LILTVKDVGR (83 aa)). Disordered stretches follow at residues 387–407 (NSAG…GFYK), 503–538 (SMKA…TSTT), and 560–824 (EGTG…LEPT). The segment covering 522–538 (SYSDTGSSTGSHGTSTT) has biased composition (low complexity). A compositionally biased stretch (polar residues) spans 563-572 (GETTQGSTNA). Composition is skewed to pro residues over residues 591 to 600 (IKPPPPPPPL) and 638 to 649 (RSPPPGTAPTPG). Positions 654 to 672 (QDSPSSPIYASISHANPSS) are enriched in polar residues. At serine 696 the chain carries Phosphoserine. Polar residues-rich tracts occupy residues 754 to 773 (QTRT…TLSE) and 783 to 798 (EAST…SAKN). Basic and acidic residues predominate over residues 800–811 (NGKEQPRTERTA). The PDZ 3 domain maps to 827–910 (LVRVRKSAAT…TKERDYIDFL (84 aa)).

As to quaternary structure, forms homooligomers. Interacts (via C-terminal PDZ domain) with MYO15A; this interaction is necessary for localization of WHRN to stereocilia tips. Interacts (via C-terminal PDZ domain) with MPP1/p55. Interacts with LRRC4C/NGL1. Interacts with MYO7A. Interacts with RPGR. Interacts with EPS8. Interacts with CASK. Interacts with CIB2. Component of USH2 complex, composed of ADGRV1, PDZD7, USH2A and WHRN. Interacts (via PDZ domains) with PDZD7; the interaction is direct. Interacts (via N-terminal PDZ domain) with USH2A (via cytoplasmic region). Interacts with ADGRV1/MASS1 (via cytoplasmic region). As to expression, expressed in the retina. Colocalizes with RPGR in the photoreceptor connecting cilium, a thin bridge linking the cell body and the light-sensing outer segment (at protein level). Detected in the inner ear throughout development from embryonic day 12 to 20 days after birth. Displays a dynamic pattern of expression after birth, demonstrating an ordered appearance and fade-out across stereocilia rows. Isoforms 5, 6, 7 and 8 are not detected in the retina.

The protein localises to the cytoplasm. It is found in the cell projection. The protein resides in the stereocilium. It localises to the growth cone. Its subcellular location is the photoreceptor inner segment. The protein localises to the synapse. In terms of biological role, involved in hearing and vision as member of the USH2 complex. Necessary for elongation and maintenance of inner and outer hair cell stereocilia in the organ of Corti in the inner ear. Involved in the maintenance of the hair bundle ankle region, which connects stereocilia in cochlear hair cells of the inner ear. In retina photoreceptors, required for the maintenance of periciliary membrane complex that seems to play a role in regulating intracellular protein transport. This is Whirlin from Mus musculus (Mouse).